We begin with the raw amino-acid sequence, 398 residues long: Endoglucanase (398 aa).

The first 23 residues, 1 to 23 (MSPLKCMALAALGAVMFVGSAQA), serve as a signal peptide directing secretion. The active-site Proton donor is the glutamate 58. Aspartate 119 (nucleophile) is an active-site residue.

Belongs to the glycosyl hydrolase 8 (cellulase D) family.

The protein resides in the secreted. The catalysed reaction is Endohydrolysis of (1-&gt;4)-beta-D-glucosidic linkages in cellulose, lichenin and cereal beta-D-glucans.. It participates in glycan metabolism; bacterial cellulose biosynthesis. Hydrolyzes carboxymethylcellulose. The sequence is that of Endoglucanase (bcsZ) from Pseudomonas fluorescens (strain SBW25).